The primary structure comprises 167 residues: Probable membrane-bound hydrogenase subunit mbhJ (167 aa).

Positions 35, 38, 102, and 132 each coordinate [4Fe-4S] cluster.

It belongs to the complex I 20 kDa subunit family. The membrane-bound hydrogenase complex is composed of MbhK and MbhL, but may also contain MbhJ. The cofactor is [4Fe-4S] cluster.

Its subcellular location is the cell membrane. It catalyses the reaction H2 + 2 oxidized [2Fe-2S]-[ferredoxin] = 2 reduced [2Fe-2S]-[ferredoxin] + 2 H(+). Inhibited by 0.1 mM Cu(2+). In terms of biological role, probable subunit of a hydrogen-evolving hydrogenase that utilizes protons both as a substrate for hydrogen production and proton translocation. Acts by coupling the redox reaction via ferredoxin and iron-sulfur (Fe-S) clusters to proton translocation across the membrane, thereby conserving the redox energy in a proton gradient. This Pyrococcus furiosus (strain ATCC 43587 / DSM 3638 / JCM 8422 / Vc1) protein is Probable membrane-bound hydrogenase subunit mbhJ.